Here is a 435-residue protein sequence, read N- to C-terminus: UPF0053 protein Rv2366c (435 aa).

Positions 1-185 constitute a CNNM transmembrane domain; sequence MTGYYQLLGS…QQRGVVAADE (185 aa). Transmembrane regions (helical) follow at residues 7–27 and 89–109; these read LLGS…DAAI and VWGL…VVGV. CBS domains follow at residues 204 to 267 and 272 to 329; these read MVPR…GRET and VMRP…IADE.

This sequence belongs to the UPF0053 family.

The protein localises to the cell membrane. This Mycobacterium tuberculosis (strain ATCC 25618 / H37Rv) protein is UPF0053 protein Rv2366c.